The following is a 163-amino-acid chain: Large ribosomal subunit protein uL10 (163 aa).

This sequence belongs to the universal ribosomal protein uL10 family. In terms of assembly, part of the ribosomal stalk of the 50S ribosomal subunit. The N-terminus interacts with L11 and the large rRNA to form the base of the stalk. The C-terminus forms an elongated spine to which L12 dimers bind in a sequential fashion forming a multimeric L10(L12)X complex.

In terms of biological role, forms part of the ribosomal stalk, playing a central role in the interaction of the ribosome with GTP-bound translation factors. This is Large ribosomal subunit protein uL10 (rplJ) from Haemophilus influenzae (strain ATCC 51907 / DSM 11121 / KW20 / Rd).